Reading from the N-terminus, the 297-residue chain is 33 kDa chaperonin (297 aa).

2 disulfide bridges follow: Cys239-Cys241 and Cys272-Cys275.

The protein belongs to the HSP33 family. Under oxidizing conditions two disulfide bonds are formed involving the reactive cysteines. Under reducing conditions zinc is bound to the reactive cysteines and the protein is inactive.

It is found in the cytoplasm. Its function is as follows. Redox regulated molecular chaperone. Protects both thermally unfolding and oxidatively damaged proteins from irreversible aggregation. Plays an important role in the bacterial defense system toward oxidative stress. The chain is 33 kDa chaperonin from Synechococcus elongatus (strain ATCC 33912 / PCC 7942 / FACHB-805) (Anacystis nidulans R2).